The following is a 197-amino-acid chain: Holliday junction branch migration complex subunit RuvA (197 aa).

The interval 1-63 is domain I; the sequence is MYAYLKGIIT…EDAHLLYGFR (63 aa). The domain II stretch occupies residues 64-142; it reads SEDEKKLFLS…VAGDDLPAKV (79 aa). A flexible linker region spans residues 143–147; it reads AVQAS. A domain III region spans residues 148–197; it reads AENQELEEAMEAMLALGYKATELKKIKKFFEGTTDTAENYIKSALKMLVK.

It belongs to the RuvA family. In terms of assembly, homotetramer. Forms an RuvA(8)-RuvB(12)-Holliday junction (HJ) complex. HJ DNA is sandwiched between 2 RuvA tetramers; dsDNA enters through RuvA and exits via RuvB. An RuvB hexamer assembles on each DNA strand where it exits the tetramer. Each RuvB hexamer is contacted by two RuvA subunits (via domain III) on 2 adjacent RuvB subunits; this complex drives branch migration. In the full resolvosome a probable DNA-RuvA(4)-RuvB(12)-RuvC(2) complex forms which resolves the HJ.

It localises to the cytoplasm. The RuvA-RuvB-RuvC complex processes Holliday junction (HJ) DNA during genetic recombination and DNA repair, while the RuvA-RuvB complex plays an important role in the rescue of blocked DNA replication forks via replication fork reversal (RFR). RuvA specifically binds to HJ cruciform DNA, conferring on it an open structure. The RuvB hexamer acts as an ATP-dependent pump, pulling dsDNA into and through the RuvAB complex. HJ branch migration allows RuvC to scan DNA until it finds its consensus sequence, where it cleaves and resolves the cruciform DNA. The sequence is that of Holliday junction branch migration complex subunit RuvA from Streptococcus pneumoniae serotype 19F (strain G54).